Consider the following 227-residue polypeptide: D-lyxose/D-mannose isomerase (227 aa).

D-fructose-binding positions include Lys-90, 103-110 (HFHWRKRE), His-171, Glu-186, and Asp-193. 4 residues coordinate Mn(2+): His-103, His-105, Glu-110, and His-171.

It belongs to the D-lyxose ketol-isomerase family. As to quaternary structure, homodimer; disulfide-linked. Dimerization is facilitated through a disulfide bond between the two monomers of the dimeric enzyme. Mn(2+) serves as cofactor.

The enzyme catalyses D-lyxose = D-xylulose. It carries out the reaction D-mannose = D-fructose. Sugar isomerase that catalyzes the reversible isomerization of D-lyxose to D-xylulose, and D-mannose to D-fructose. Shows similar activity toward D-lyxose and D-mannose with a turnover and catalytic efficiency for D-lyxose as a substrate only 1.1- and 1.3-fold higher than those for D-mannose, respectively. Shows weaker activity with L-gulose, D-talose, L-ribose and L-allose. Overexpression enables cell growth on the rare pentose D-lyxose as the sole carbon source. This Escherichia coli O157:H7 protein is D-lyxose/D-mannose isomerase.